The sequence spans 346 residues: Protein-glutamate methylesterase/protein-glutamine glutaminase (346 aa).

Residues 6–123 form the Response regulatory domain; that stretch reads KVLVVDDSAF…SLDLEKVRDL (118 aa). The residue at position 57 (Asp-57) is a 4-aspartylphosphate. A CheB-type methylesterase domain is found at 155–346; that stretch reads PFDKTIIVIG…ADSIVRQCKR (192 aa). Catalysis depends on residues Ser-166, His-193, and Asp-289.

This sequence belongs to the CheB family. In terms of processing, phosphorylated by CheA. Phosphorylation of the N-terminal regulatory domain activates the methylesterase activity.

Its subcellular location is the cytoplasm. It catalyses the reaction [protein]-L-glutamate 5-O-methyl ester + H2O = L-glutamyl-[protein] + methanol + H(+). The catalysed reaction is L-glutaminyl-[protein] + H2O = L-glutamyl-[protein] + NH4(+). In terms of biological role, involved in chemotaxis. Part of a chemotaxis signal transduction system that modulates chemotaxis in response to various stimuli. Catalyzes the demethylation of specific methylglutamate residues introduced into the chemoreceptors (methyl-accepting chemotaxis proteins or MCP) by CheR. Also mediates the irreversible deamidation of specific glutamine residues to glutamic acid. This is Protein-glutamate methylesterase/protein-glutamine glutaminase from Halalkalibacterium halodurans (strain ATCC BAA-125 / DSM 18197 / FERM 7344 / JCM 9153 / C-125) (Bacillus halodurans).